Reading from the N-terminus, the 234-residue chain is Phosphoribosylformylglycinamidine synthase subunit PurQ (234 aa).

A Glutamine amidotransferase type-1 domain is found at 4 to 234 (RIGVVTFPGS…TSILKKLVNA (231 aa)). The Nucleophile role is filled by Cys-87. Residues His-204 and Glu-206 contribute to the active site.

Part of the FGAM synthase complex composed of 1 PurL, 1 PurQ and 2 PurS subunits.

Its subcellular location is the cytoplasm. It carries out the reaction N(2)-formyl-N(1)-(5-phospho-beta-D-ribosyl)glycinamide + L-glutamine + ATP + H2O = 2-formamido-N(1)-(5-O-phospho-beta-D-ribosyl)acetamidine + L-glutamate + ADP + phosphate + H(+). The enzyme catalyses L-glutamine + H2O = L-glutamate + NH4(+). It functions in the pathway purine metabolism; IMP biosynthesis via de novo pathway; 5-amino-1-(5-phospho-D-ribosyl)imidazole from N(2)-formyl-N(1)-(5-phospho-D-ribosyl)glycinamide: step 1/2. Its function is as follows. Part of the phosphoribosylformylglycinamidine synthase complex involved in the purines biosynthetic pathway. Catalyzes the ATP-dependent conversion of formylglycinamide ribonucleotide (FGAR) and glutamine to yield formylglycinamidine ribonucleotide (FGAM) and glutamate. The FGAM synthase complex is composed of three subunits. PurQ produces an ammonia molecule by converting glutamine to glutamate. PurL transfers the ammonia molecule to FGAR to form FGAM in an ATP-dependent manner. PurS interacts with PurQ and PurL and is thought to assist in the transfer of the ammonia molecule from PurQ to PurL. The sequence is that of Phosphoribosylformylglycinamidine synthase subunit PurQ from Streptomyces avermitilis (strain ATCC 31267 / DSM 46492 / JCM 5070 / NBRC 14893 / NCIMB 12804 / NRRL 8165 / MA-4680).